Reading from the N-terminus, the 497-residue chain is Signal recognition particle receptor FtsY (497 aa).

Disordered regions lie at residues 1-63 (MAKE…TEAE) and 79-130 (AESE…EWQA). Over residues 87-96 (EAEVVAQPEP) the composition is skewed to low complexity. GTP is bound by residues 300–307 (GVNGVGKT), 382–386 (DTAGR), and 446–449 (TKLD).

Belongs to the GTP-binding SRP family. FtsY subfamily. Part of the signal recognition particle protein translocation system, which is composed of SRP and FtsY. SRP is a ribonucleoprotein composed of Ffh and a 4.5S RNA molecule. Binds to SecY. In terms of processing, proteolytically cleaved. The cleavage may regulate function and subcellular location of FtsY. Full-length FtsY is found primarily associated with the membrane, while cleaved protein is predominantly present in the cytoplasm.

The protein resides in the cell inner membrane. It localises to the cytoplasm. The enzyme catalyses GTP + H2O = GDP + phosphate + H(+). Conformation of the Ffh-FtsY complex and regulation of its GTPase activity are modulated by the 4.5S RNA. Formation of the FfH-FtsY complex leads to a mutual stimulation of both GTPases. Involved in targeting and insertion of nascent membrane proteins into the cytoplasmic membrane. Acts as a receptor for the complex formed by the signal recognition particle (SRP) and the ribosome-nascent chain (RNC). Interaction with SRP-RNC leads to the transfer of the RNC complex to the Sec translocase for insertion into the membrane, the hydrolysis of GTP by both Ffh and FtsY, and the dissociation of the SRP-FtsY complex into the individual components. The protein is Signal recognition particle receptor FtsY of Escherichia coli (strain K12).